The following is a 174-amino-acid chain: MTLILGIDPGSRITGFGVVQQTPRGCVYVASGCIRTGAGELAERLQIVYRGVREVIQTYGPVTMGIEKVFMAKNADSALKLGQARGAAIVAGAEEGMEIAEYTATQVKQAVVGTGAANKEQVQMMVMHMLKLTSKPQIDASDALAIAICHAHTRSSLLPHGLGAARSRGGRLRL.

Active-site residues include D8, E67, and D139. Mg(2+) contacts are provided by D8, E67, and D139.

This sequence belongs to the RuvC family. Homodimer which binds Holliday junction (HJ) DNA. The HJ becomes 2-fold symmetrical on binding to RuvC with unstacked arms; it has a different conformation from HJ DNA in complex with RuvA. In the full resolvosome a probable DNA-RuvA(4)-RuvB(12)-RuvC(2) complex forms which resolves the HJ. Mg(2+) is required as a cofactor.

It localises to the cytoplasm. The enzyme catalyses Endonucleolytic cleavage at a junction such as a reciprocal single-stranded crossover between two homologous DNA duplexes (Holliday junction).. In terms of biological role, the RuvA-RuvB-RuvC complex processes Holliday junction (HJ) DNA during genetic recombination and DNA repair. Endonuclease that resolves HJ intermediates. Cleaves cruciform DNA by making single-stranded nicks across the HJ at symmetrical positions within the homologous arms, yielding a 5'-phosphate and a 3'-hydroxyl group; requires a central core of homology in the junction. The consensus cleavage sequence is 5'-(A/T)TT(C/G)-3'. Cleavage occurs on the 3'-side of the TT dinucleotide at the point of strand exchange. HJ branch migration catalyzed by RuvA-RuvB allows RuvC to scan DNA until it finds its consensus sequence, where it cleaves and resolves the cruciform DNA. The polypeptide is Crossover junction endodeoxyribonuclease RuvC (Pseudomonas fluorescens (strain SBW25)).